Here is a 97-residue protein sequence, read N- to C-terminus: Large ribosomal subunit protein bL27 (97 aa).

Residues 14 to 36 (HKKGGGSTSNGRDSQAKRLGAKA) form a disordered region.

The protein belongs to the bacterial ribosomal protein bL27 family.

The polypeptide is Large ribosomal subunit protein bL27 (Streptococcus sanguinis (strain SK36)).